The following is a 167-amino-acid chain: Small ribosomal subunit protein uS5 (167 aa).

The 64-residue stretch at 11 to 74 (LQEKLIAVNR…EKARRNMINV (64 aa)) folds into the S5 DRBM domain.

This sequence belongs to the universal ribosomal protein uS5 family. As to quaternary structure, part of the 30S ribosomal subunit. Contacts proteins S4 and S8.

Its function is as follows. With S4 and S12 plays an important role in translational accuracy. Located at the back of the 30S subunit body where it stabilizes the conformation of the head with respect to the body. The protein is Small ribosomal subunit protein uS5 of Shigella dysenteriae serotype 1 (strain Sd197).